We begin with the raw amino-acid sequence, 523 residues long: 2-isopropylmalate synthase (523 aa).

A Pyruvate carboxyltransferase domain is found at 5–267 (VIIFDTTLRD…HTAINHQEIW (263 aa)). Residues aspartate 14, histidine 202, histidine 204, and asparagine 238 each contribute to the Mn(2+) site. Positions 392-523 (RLDYFSVQSG…QHNENNKETV (132 aa)) are regulatory domain.

This sequence belongs to the alpha-IPM synthase/homocitrate synthase family. LeuA type 1 subfamily. Homodimer. Mn(2+) serves as cofactor.

Its subcellular location is the cytoplasm. It catalyses the reaction 3-methyl-2-oxobutanoate + acetyl-CoA + H2O = (2S)-2-isopropylmalate + CoA + H(+). Its pathway is amino-acid biosynthesis; L-leucine biosynthesis; L-leucine from 3-methyl-2-oxobutanoate: step 1/4. Catalyzes the condensation of the acetyl group of acetyl-CoA with 3-methyl-2-oxobutanoate (2-ketoisovalerate) to form 3-carboxy-3-hydroxy-4-methylpentanoate (2-isopropylmalate). The chain is 2-isopropylmalate synthase from Shigella flexneri.